The primary structure comprises 154 residues: Putative NADPH-dependent 7-cyano-7-deazaguanine reductase (154 aa).

Asp52 acts as the Proton donor in catalysis. Substrate-binding positions include 67-69 (VES) and 86-87 (HE).

Belongs to the GTP cyclohydrolase I family. QueF type 1 subfamily.

It is found in the cytoplasm. It carries out the reaction 7-aminomethyl-7-carbaguanine + 2 NADP(+) = 7-cyano-7-deazaguanine + 2 NADPH + 3 H(+). Its pathway is tRNA modification; tRNA-queuosine biosynthesis. In terms of biological role, catalyzes the NADPH-dependent reduction of 7-cyano-7-deazaguanine (preQ0) to 7-aminomethyl-7-deazaguanine (preQ1). The sequence is that of Putative NADPH-dependent 7-cyano-7-deazaguanine reductase from Streptococcus pneumoniae (strain ATCC BAA-255 / R6).